We begin with the raw amino-acid sequence, 225 residues long: Large ribosomal subunit protein uL4 (225 aa).

The interval 46–102 (KRQGTHATKGRGEVRGGGRKPFRQKGTGRARQGSIRAPHFTGGGTVHGPQPRDYSQR) is disordered. Over residues 62 to 73 (GGRKPFRQKGTG) the composition is skewed to basic residues.

The protein belongs to the universal ribosomal protein uL4 family. In terms of assembly, part of the 50S ribosomal subunit.

In terms of biological role, one of the primary rRNA binding proteins, this protein initially binds near the 5'-end of the 23S rRNA. It is important during the early stages of 50S assembly. It makes multiple contacts with different domains of the 23S rRNA in the assembled 50S subunit and ribosome. Its function is as follows. Forms part of the polypeptide exit tunnel. This is Large ribosomal subunit protein uL4 from Corynebacterium urealyticum (strain ATCC 43042 / DSM 7109).